The sequence spans 2027 residues: MLKFKYGARNPLDAGAAEPIASRASRLNLFFQGKPPFMTQQQMSPLSREGILDALFVLFEECSQPALMKIKHVSNFVRKYSDTIAELQELQPSAKDFEVRSLVGCGHFAEVQVVREKATGDIYAMKVMKKKALLAQEQVSFFEEERNILSRSTSPWIPQLQYAFQDKNHLYLVMEYQPGGDLLSLLNRYEDQLDENLIQFYLAELILAVHSVHLMGYVHRDIKPENILVDRTGHIKLVDFGSAAKMNSNKMVNAKLPIGTPDYMAPEVLTVMNGDGKGTYGLDCDWWSVGVIAYEMIYGRSPFAEGTSARTFNNIMNFQRFLKFPDDPKVSSDFLDLIQSLLCGQKERLKFEGLCCHPFFSKIDWNNIRNSPPPFVPTLKSDDDTSNFDEPEKNSWVSSSPCQLSPSGFSGEELPFVGFSYSKALGILGRSESVVSGLDSPAKTSSMEKKLLIKSKELQDSQDKCHKMEQEMTRLHRRVSEVEAVLSQKEVELKASETQRSLLEQDLATYITECSSLKRSLEQARMEVSQEDDKALQLLHDIREQSRKLQEIKEQEYQAQVEEMRLMMNQLEEDLVSARRRSDLYESELRESRLAAEEFKRKATECQHKLLKAKDQGKPEVGEYAKLEKINAEQQLKIQELQEKLEKAVKASTEATELLQNIRQAKERAERELEKLQNREDSSEGIRKKLVEAEELEEKHREAQVSAQHLEVHLKQKEQHYEEKIKVLDNQIKKDLADKETLENMMQRHEEEAHEKGKILSEQKAMINAMDSKIRSLEQRIVELSEANKLAANSSLFTQRNMKAQEEMISELRQQKFYLETQAGKLEAQNRKLEEQLEKISHQDHSDKNRLLELETRLREVSLEHEEQKLELKRQLTELQLSLQERESQLTALQAARAALESQLRQAKTELEETTAEAEEEIQALTAHRDEIQRKFDALRNSCTVITDLEEQLNQLTEDNAELNNQNFYLSKQLDEASGANDEIVQLRSEVDHLRREITEREMQLTSQKQTMEALKTTCTMLEEQVMDLEALNDELLEKERQWEAWRSVLGDEKSQFECRVRELQRMLDTEKQSRARADQRITESRQVVELAVKEHKAEILALQQALKEQKLKAESLSDKLNDLEKKHAMLEMNARSLQQKLETERELKQRLLEEQAKLQQQMDLQKNHIFRLTQGLQEALDRADLLKTERSDLEYQLENIQVLYSHEKVKMEGTISQQTKLIDFLQAKMDQPAKKKKGLFSRRKEDPALPTQVPLQYNELKLALEKEKARCAELEEALQKTRIELRSAREEAAHRKATDHPHPSTPATARQQIAMSAIVRSPEHQPSAMSLLAPPSSRRKESSTPEEFSRRLKERMHHNIPHRFNVGLNMRATKCAVCLDTVHFGRQASKCLECQVMCHPKCSTCLPATCGLPAEYATHFTEAFCRDKMNSPGLQTKEPSSSLHLEGWMKVPRNNKRGQQGWDRKYIVLEGSKVLIYDNEAREAGQRPVEEFELCLPDGDVSIHGAVGASELANTAKADVPYILKMESHPHTTCWPGRTLYLLAPSFPDKQRWVTALESVVAGGRVSREKAEADAKLLGNSLLKLEGDDRLDMNCTLPFSDQVVLVGTEEGLYALNVLKNSLTHVPGIGAVFQIYIIKDLEKLLMIAGEERALCLVDVKKVKQSLAQSHLPAQPDISPNIFEAVKGCHLFGAGKIENGLCICAAMPSKVVILRYNENLSKYCIRKEIETSEPCSCIHFTNYSILIGTNKFYEIDMKQYTLEEFLDKNDHSLAPAVFAASSNSFPVSIVQVNSAGQREEYLLCFHEFGVFVDSYGRRSRTDDLKWSRLPLAFAYREPYLFVTHFNSLEVIEIQARSSAGTPARAYLDIPNPRYLGPAISSGAIYLASSYQDKLRVICCKGNLVKESGTEHHRGPSTSRSSPNKRGPPTYNEHITKRVASSPAPPEGPSHPREPSTPHRYREGRTELRRDKSPGRPLEREKSPGRMLSTRRERSPGRLFEDSSRGRLPAGAVRTPLSQVNKVWDQSSV.

The residue at position 1 (Met-1) is an N-acetylmethionine. In terms of domain architecture, Protein kinase spans Phe-97 to Phe-360. Residues Val-103 to Val-111 and Lys-126 each bind ATP. Asp-221 (proton acceptor) is an active-site residue. The AGC-kinase C-terminal domain occupies Ser-361–Ser-431. 4 positions are modified to phosphoserine: Ser-433, Ser-440, Ser-480, and Ser-582. Residues Ile-453–Lys-1297 adopt a coiled-coil conformation. An interaction with Rho/Rac region spans residues Leu-1091 to Pro-1302. Tyr-1196 bears the Phosphotyrosine mark. The span at Arg-1290 to His-1303 shows a compositional bias: basic and acidic residues. Disordered regions lie at residues Arg-1290–Ala-1310 and Ser-1322–Arg-1351. Residues Pro-1327–Ser-1337 are compositionally biased toward low complexity. A compositionally biased stretch (basic and acidic residues) spans Arg-1339–Arg-1351. The Phorbol-ester/DAG-type zinc finger occupies Pro-1362–Cys-1411. In terms of domain architecture, PH spans Ser-1443–Ala-1563. The CNH domain occupies Arg-1591–Gly-1881. Lys-1721 is modified (N6-acetyllysine). Residues Glu-1905 to Arg-2012 form a disordered region. Residue Ser-1940 is modified to Phosphoserine. Over residues Ser-1948 to Arg-2003 the composition is skewed to basic and acidic residues. The SH3-binding signature appears at Pro-1953–Arg-1958. Phosphoserine is present on Ser-1993. Residue Thr-2013 is modified to Phosphothreonine.

This sequence belongs to the protein kinase superfamily. AGC Ser/Thr protein kinase family. In terms of assembly, directly interacts with KIF14 depending on the activation state (stronger interaction with the kinase-dead form). Homodimer. Interacts with TTC3.

It is found in the cytoplasm. The enzyme catalyses L-seryl-[protein] + ATP = O-phospho-L-seryl-[protein] + ADP + H(+). It carries out the reaction L-threonyl-[protein] + ATP = O-phospho-L-threonyl-[protein] + ADP + H(+). Its function is as follows. Plays a role in cytokinesis. Required for KIF14 localization to the central spindle and midbody. Putative RHO/RAC effector that binds to the GTP-bound forms of RHO and RAC1. It probably binds p21 with a tighter specificity in vivo. Displays serine/threonine protein kinase activity. Plays an important role in the regulation of cytokinesis and the development of the central nervous system. Phosphorylates MYL9/MLC2. In Homo sapiens (Human), this protein is Citron Rho-interacting kinase (CIT).